The sequence spans 418 residues: Acetylornithine aminotransferase (418 aa).

Residues 116–117 (GA) and Phe149 contribute to the pyridoxal 5'-phosphate site. Position 152 (Arg152) interacts with N(2)-acetyl-L-ornithine. 240-243 (DEVQ) contributes to the pyridoxal 5'-phosphate binding site. The residue at position 269 (Lys269) is an N6-(pyridoxal phosphate)lysine. Ser296 contributes to the N(2)-acetyl-L-ornithine binding site. Thr297 serves as a coordination point for pyridoxal 5'-phosphate.

It belongs to the class-III pyridoxal-phosphate-dependent aminotransferase family. ArgD subfamily. Homodimer. The cofactor is pyridoxal 5'-phosphate.

It localises to the cytoplasm. It catalyses the reaction N(2)-acetyl-L-ornithine + 2-oxoglutarate = N-acetyl-L-glutamate 5-semialdehyde + L-glutamate. It participates in amino-acid biosynthesis; L-arginine biosynthesis; N(2)-acetyl-L-ornithine from L-glutamate: step 4/4. This Prochlorococcus marinus (strain MIT 9313) protein is Acetylornithine aminotransferase.